The chain runs to 74 residues: Large ribosomal subunit protein bL31 (74 aa).

Positions 16, 18, 37, and 40 each coordinate Zn(2+).

It belongs to the bacterial ribosomal protein bL31 family. Type A subfamily. Part of the 50S ribosomal subunit. It depends on Zn(2+) as a cofactor.

In terms of biological role, binds the 23S rRNA. The polypeptide is Large ribosomal subunit protein bL31 (Koribacter versatilis (strain Ellin345)).